Consider the following 238-residue polypeptide: MEPGLWLLFGLTVTSAAGFVPCSQSGDAGRRGVSQAPTAARSEGDCEETVAGPGEETVAGPGEGTVAPTALQGPSPGSPGQEQAAEGAPEHHRSRRCTCFTYKDKECVYYCHLDIIWINTPEQTVPYGLSNYRGSFRGKRSAGPLPGNLQLSHRPHLRCACVGRYDKACLHFCTQTLDVSSNSRTAEKTDKEEEGKVEVKDQQSKQALDLHHPKLMPGSGLALAPSTCPRCLFQEGAP.

The signal sequence occupies residues 1–16; it reads MEPGLWLLFGLTVTSA. Residues 17 to 94 constitute a propeptide that is removed on maturation; the sequence is AGFVPCSQSG…AEGAPEHHRS (78 aa). Residues 24-89 are disordered; the sequence is QSGDAGRRGV…GQEQAAEGAP (66 aa). Intrachain disulfides connect Cys97–Cys111 and Cys99–Cys107. Positions 118 to 238 are excised as a propeptide; sequence INTPEQTVPY…PRCLFQEGAP (121 aa). The segment at 159-173 is endothelin-like; sequence CACVGRYDKACLHFC. A disordered region spans residues 183 to 219; sequence SRTAEKTDKEEEGKVEVKDQQSKQALDLHHPKLMPGS. The span at 185–212 shows a compositional bias: basic and acidic residues; sequence TAEKTDKEEEGKVEVKDQQSKQALDLHH.

It belongs to the endothelin/sarafotoxin family. In terms of tissue distribution, expressed in trophoblasts and placental stem villi vessels, but not in cultured placental smooth muscle cells.

The protein localises to the secreted. In terms of biological role, endothelins are endothelium-derived vasoconstrictor peptides. The protein is Endothelin-3 (EDN3) of Homo sapiens (Human).